Here is a 390-residue protein sequence, read N- to C-terminus: Magnesium-protoporphyrin IX monomethyl ester [oxidative] cyclase (390 aa).

The protein belongs to the AcsF family. Fe cation is required as a cofactor.

It catalyses the reaction Mg-protoporphyrin IX 13-monomethyl ester + 3 NADPH + 3 O2 + 2 H(+) = 3,8-divinyl protochlorophyllide a + 3 NADP(+) + 5 H2O. The protein operates within porphyrin-containing compound metabolism; chlorophyll biosynthesis (light-independent). Catalyzes the formation of the isocyclic ring in chlorophyll biosynthesis. Mediates the cyclase reaction, which results in the formation of divinylprotochlorophyllide (Pchlide) characteristic of all chlorophylls from magnesium-protoporphyrin IX 13-monomethyl ester (MgPMME). This is Magnesium-protoporphyrin IX monomethyl ester [oxidative] cyclase from Prochlorococcus marinus subsp. pastoris (strain CCMP1986 / NIES-2087 / MED4).